A 493-amino-acid polypeptide reads, in one-letter code: MSNKPENLTLITDDGLRLDGRRADEIRPMKIEVGVLSRADGSCYLEWGRNKILVGVFGPREAHPRRSQRADSAVIRYRYNMASFSVEDRARPGPSRRSIEISKVSREAFEPVIMAELFPKTAIDIFVEVLQADAGTRTAAINASSIALADAGIPMKGLITSCAFGKVDGKIVLDLNKEEDNYGEADFPVAMTQDGEITLIQMDGNLTPDEIKQGLELVKKGCKEILEIQQAVLRKKFETPVEEVSEETAPEKGAEKEVLEPSPVAAIVEETPEEAEEPEVEISEEVEAEILASEVIPDFEDELEEEIEEELEESEEDLETEEEEFEEEALEEEAEPEEDLEEDLEEDLGEELEEEEEELEEEEFEEEALEEETELEASLECAPELKEFDEIEARLEKEDASIEAEEEIEPEAEEATEEGLEEEAEIEETAASEEENIEAEAEAEEEAEPEVEAEEISTEAEEAEEEPEEEKSEGPWKVVKDPSEAGTRGEKDE.

2 disordered regions span residues 244–264 and 291–493; these read VSEE…PSPV and LASE…EKDE. Basic and acidic residues predominate over residues 249–259; it reads APEKGAEKEVL. Residues 297-377 are compositionally biased toward acidic residues; sequence PDFEDELEEE…ALEEETELEA (81 aa). The segment covering 383-400 has biased composition (basic and acidic residues); the sequence is PELKEFDEIEARLEKEDA. A compositionally biased stretch (acidic residues) spans 401-471; the sequence is SIEAEEEIEP…EAEEEPEEEK (71 aa). The segment covering 472–493 has biased composition (basic and acidic residues); that stretch reads SEGPWKVVKDPSEAGTRGEKDE.

It belongs to the RNase PH family. Rrp41 subfamily. Component of the archaeal exosome complex. Forms a hexameric ring-like arrangement composed of 3 Rrp41-Rrp42 heterodimers. The hexameric ring associates with a trimer of Rrp4 and/or Csl4 subunits.

It is found in the cytoplasm. Functionally, catalytic component of the exosome, which is a complex involved in RNA degradation. Has 3'-&gt;5' exoribonuclease activity. Can also synthesize heteromeric RNA-tails. The chain is Exosome complex component Rrp41 from Methanosarcina mazei (strain ATCC BAA-159 / DSM 3647 / Goe1 / Go1 / JCM 11833 / OCM 88) (Methanosarcina frisia).